The sequence spans 183 residues: Ribosome-binding factor A (183 aa).

The segment at Pro-132 to Glu-183 is disordered.

This sequence belongs to the RbfA family. In terms of assembly, monomer. Binds 30S ribosomal subunits, but not 50S ribosomal subunits or 70S ribosomes.

It is found in the cytoplasm. Functionally, one of several proteins that assist in the late maturation steps of the functional core of the 30S ribosomal subunit. Associates with free 30S ribosomal subunits (but not with 30S subunits that are part of 70S ribosomes or polysomes). Required for efficient processing of 16S rRNA. May interact with the 5'-terminal helix region of 16S rRNA. The chain is Ribosome-binding factor A from Mycobacterium tuberculosis (strain ATCC 25177 / H37Ra).